Reading from the N-terminus, the 93-residue chain is C-C motif chemokine 3 (93 aa).

The signal sequence occupies residues Met1–Ala24. 2 disulfides stabilise this stretch: Cys34/Cys58 and Cys35/Cys74.

The protein belongs to the intercrine beta (chemokine CC) family. In terms of assembly, self-associates. Also heterodimer of MIP-1-alpha(4-69) and MIP-1-beta(3-69). Interacts with CCR1.

The protein localises to the secreted. In terms of biological role, monokine with inflammatory and chemokinetic properties. Binds to CCR1, CCR4 and CCR5. One of the major HIV-suppressive factors produced by CD8+ T-cells. Recombinant MIP-1-alpha induces a dose-dependent inhibition of different strains of HIV-1, HIV-2, and simian immunodeficiency virus (SIV). The sequence is that of C-C motif chemokine 3 (CCL3) from Bos taurus (Bovine).